Here is a 345-residue protein sequence, read N- to C-terminus: RING finger protein 228 (345 aa).

Over residues 1 to 21 (MAAPASDSGGSQQSPSSSPGS) the composition is skewed to low complexity. A disordered region spans residues 1-43 (MAAPASDSGGSQQSPSSSPGSREGAGVAAKGAPDCGDAGARDA). An RING-type zinc finger spans residues 58–125 (CKICYNYFDA…PGAIACPVCR (68 aa)). Positions 159–213 (LPQDRLPPLPARLPAPAAAPPPTPAPPPPPSPAPPQPPPPPPAEDAAPGPRARPG) are disordered. Residues 163 to 201 (RLPPLPARLPAPAAAPPPTPAPPPPPSPAPPQPPPPPPA) are compositionally biased toward pro residues. The span at 202 to 213 (EDAAPGPRARPG) shows a compositional bias: low complexity. A run of 2 helical transmembrane segments spans residues 236 to 256 (VCVV…LIFV) and 290 to 310 (LSVA…ICWL). Positions 319–345 (AGSTGGSGGGGGPRARAAAGGARRSDT) are disordered. Residues 321 to 331 (STGGSGGGGGP) are compositionally biased toward gly residues. Low complexity predominate over residues 332 to 345 (RARAAAGGARRSDT).

The protein resides in the membrane. The polypeptide is RING finger protein 228 (Homo sapiens (Human)).